The following is a 443-amino-acid chain: Methionine aminopeptidase 2-1 (443 aa).

Residues 1-90 (MAAQADDELN…RVPVSELFPN (90 aa)) are disordered. Positions 33–48 (ADNDDSEDDEKEEEGG) are enriched in acidic residues. Basic residues predominate over residues 58–73 (KKKKKRKPKKKKKGGA). H196 is a substrate binding site. A divalent metal cation is bound by residues D216, D227, and H296. Position 304 (H304) interacts with substrate. E329 and E424 together coordinate a divalent metal cation.

It belongs to the peptidase M24A family. Methionine aminopeptidase eukaryotic type 2 subfamily. Co(2+) serves as cofactor. Zn(2+) is required as a cofactor. Requires Mn(2+) as cofactor. It depends on Fe(2+) as a cofactor.

It is found in the cytoplasm. It catalyses the reaction Release of N-terminal amino acids, preferentially methionine, from peptides and arylamides.. In terms of biological role, cotranslationally removes the N-terminal methionine from nascent proteins. The N-terminal methionine is often cleaved when the second residue in the primary sequence is small and uncharged (Met-Ala-, Cys, Gly, Pro, Ser, Thr, or Val). The polypeptide is Methionine aminopeptidase 2-1 (Talaromyces stipitatus (strain ATCC 10500 / CBS 375.48 / QM 6759 / NRRL 1006) (Penicillium stipitatum)).